A 416-amino-acid polypeptide reads, in one-letter code: Glutamyl-tRNA reductase (416 aa).

Substrate is bound by residues 49-52 (TCNR), S105, 110-112 (EPQ), and Q116. C50 acts as the Nucleophile in catalysis. 185–190 (GAGETI) is an NADP(+) binding site.

The protein belongs to the glutamyl-tRNA reductase family. Homodimer.

It carries out the reaction (S)-4-amino-5-oxopentanoate + tRNA(Glu) + NADP(+) = L-glutamyl-tRNA(Glu) + NADPH + H(+). Its pathway is porphyrin-containing compound metabolism; protoporphyrin-IX biosynthesis; 5-aminolevulinate from L-glutamyl-tRNA(Glu): step 1/2. Its function is as follows. Catalyzes the NADPH-dependent reduction of glutamyl-tRNA(Glu) to glutamate 1-semialdehyde (GSA). This chain is Glutamyl-tRNA reductase, found in Shewanella pealeana (strain ATCC 700345 / ANG-SQ1).